The following is a 210-amino-acid chain: ATP-dependent Clp protease proteolytic subunit (210 aa).

Ser107 acts as the Nucleophile in catalysis. The active site involves His132.

It belongs to the peptidase S14 family. As to quaternary structure, fourteen ClpP subunits assemble into 2 heptameric rings which stack back to back to give a disk-like structure with a central cavity, resembling the structure of eukaryotic proteasomes.

It is found in the cytoplasm. The enzyme catalyses Hydrolysis of proteins to small peptides in the presence of ATP and magnesium. alpha-casein is the usual test substrate. In the absence of ATP, only oligopeptides shorter than five residues are hydrolyzed (such as succinyl-Leu-Tyr-|-NHMec, and Leu-Tyr-Leu-|-Tyr-Trp, in which cleavage of the -Tyr-|-Leu- and -Tyr-|-Trp bonds also occurs).. Functionally, cleaves peptides in various proteins in a process that requires ATP hydrolysis. Has a chymotrypsin-like activity. Plays a major role in the degradation of misfolded proteins. This Cereibacter sphaeroides (strain ATCC 17025 / ATH 2.4.3) (Rhodobacter sphaeroides) protein is ATP-dependent Clp protease proteolytic subunit.